A 325-amino-acid polypeptide reads, in one-letter code: Hydroxymethylglutaryl-CoA lyase, mitochondrial (325 aa).

A mitochondrion-targeting transit peptide spans 1 to 27; that stretch reads MATVKKVLPRRLVGLATLRAVSTSSVG. A Pyruvate carboxyltransferase domain is found at 33-300; the sequence is VKIVEVGPRD…HTGVNLQKLL (268 aa). Arginine 41 provides a ligand contact to substrate. Aspartate 42 is an a divalent metal cation binding site. Position 48 is an N6-acetyllysine; alternate (lysine 48). Lysine 48 is modified (N6-succinyllysine; alternate). Lysine 111 is subject to N6-acetyllysine. N6-acetyllysine; alternate occurs at positions 137 and 179. N6-succinyllysine; alternate occurs at positions 137 and 179. A divalent metal cation-binding residues include histidine 233 and histidine 235. Cysteine 266 is a catalytic residue. Asparagine 275 contacts a divalent metal cation. A Microbody targeting signal motif is present at residues 323-325; the sequence is CKL. Lysine 324 carries the post-translational modification N6-acetyllysine.

The protein belongs to the HMG-CoA lyase family. As to quaternary structure, homodimer; disulfide-linked. Can also form homotetramers.

It localises to the mitochondrion matrix. Its subcellular location is the peroxisome. It catalyses the reaction (3S)-3-hydroxy-3-methylglutaryl-CoA = acetoacetate + acetyl-CoA. It participates in metabolic intermediate metabolism; (S)-3-hydroxy-3-methylglutaryl-CoA degradation; acetoacetate from (S)-3-hydroxy-3-methylglutaryl-CoA: step 1/1. Mitochondrial 3-hydroxy-3-methylglutaryl-CoA lyase that catalyzes a cation-dependent cleavage of (S)-3-hydroxy-3-methylglutaryl-CoA into acetyl-CoA and acetoacetate, a key step in ketogenesis. Terminal step in leucine catabolism. Ketone bodies (beta-hydroxybutyrate, acetoacetate and acetone) are essential as an alternative source of energy to glucose, as lipid precursors and as regulators of metabolism. The chain is Hydroxymethylglutaryl-CoA lyase, mitochondrial (HMGCL) from Bos taurus (Bovine).